Reading from the N-terminus, the 418-residue chain is AP-3 complex subunit mu-2 (418 aa).

The MHD domain maps to 176–417 (NNEAYFDVVE…MTKAGKFQVR (242 aa)).

This sequence belongs to the adaptor complexes medium subunit family. In terms of assembly, adaptor protein complex 3 (AP-3) is a heterotetramer composed of two large adaptins (delta-type subunit AP3D1 and beta-type subunit AP3B1 or AP3B2), a medium adaptin (mu-type subunit AP3M1 or AP3M2) and a small adaptin (sigma-type subunit APS1 or AP3S2). AP-3 associates with the BLOC-1 complex.

The protein localises to the golgi apparatus. It localises to the cytoplasmic vesicle membrane. Its function is as follows. Component of the adaptor complexes which link clathrin to receptors in coated vesicles. Clathrin-associated protein complexes are believed to interact with the cytoplasmic tails of membrane proteins, leading to their selection and concentration. Ap47 is a subunit of the plasma membrane adaptor. In concert with the BLOC-1 complex, AP-3 is required to target cargos into vesicles assembled at cell bodies for delivery into neurites and nerve terminals. This Rattus norvegicus (Rat) protein is AP-3 complex subunit mu-2 (Ap3m2).